The primary structure comprises 76 residues: ATP synthase subunit c (76 aa).

2 helical membrane passes run 5–25 (GIIA…GIGI) and 54–74 (AALA…LVFL).

The protein belongs to the ATPase C chain family. F-type ATPases have 2 components, F(1) - the catalytic core - and F(0) - the membrane proton channel. F(1) has five subunits: alpha(3), beta(3), gamma(1), delta(1), epsilon(1). F(0) has three main subunits: a(1), b(2) and c(10-14). The alpha and beta chains form an alternating ring which encloses part of the gamma chain. F(1) is attached to F(0) by a central stalk formed by the gamma and epsilon chains, while a peripheral stalk is formed by the delta and b chains.

The protein localises to the cell membrane. F(1)F(0) ATP synthase produces ATP from ADP in the presence of a proton or sodium gradient. F-type ATPases consist of two structural domains, F(1) containing the extramembraneous catalytic core and F(0) containing the membrane proton channel, linked together by a central stalk and a peripheral stalk. During catalysis, ATP synthesis in the catalytic domain of F(1) is coupled via a rotary mechanism of the central stalk subunits to proton translocation. In terms of biological role, key component of the F(0) channel; it plays a direct role in translocation across the membrane. A homomeric c-ring of between 10-14 subunits forms the central stalk rotor element with the F(1) delta and epsilon subunits. In Ruminiclostridium cellulolyticum (strain ATCC 35319 / DSM 5812 / JCM 6584 / H10) (Clostridium cellulolyticum), this protein is ATP synthase subunit c.